We begin with the raw amino-acid sequence, 448 residues long: MSRLFGTDGVRGIANTELTAELAYNLGRAGAYVLTEGTHKPKILVAKDTRISGDMLEAALVAGILSVGAEALCLGVVPTPAVAHLTRAYGADAGVMISASHNPVEYNGIKFFDDKGYKLSDDLEDEIQRVIESGFENVPSPTGANLGREIIEKAALEDYISFAKDTIGISLEGLRVALDCANGASHEAAVRAFRELGAEIFVINDNPDGTNINENCGSTHPEELMEYVVKKKCHMGFAFDGDADRCLAVDEQGNLVDGDFILTICAKYLKELGRLKDDTLVVTVMSNLGLMIACKNEKINTAVTKVGDRYVLEEMLAKGYSLGGEQSGHIIFLDHNSTGDGLVTALQVASIVKRTGKSLFELKNVMKVLPQVLVNAKVPNNMKNIYEEDEEIIAEIKKMEAALDGCGRVLIRPSGTEPLVRVMLEGENQAEIDEMAHNLANMIEAKCN.

Ser100 (phosphoserine intermediate) is an active-site residue. Mg(2+) contacts are provided by Ser100, Asp240, Asp242, and Asp244. Ser100 is subject to Phosphoserine.

This sequence belongs to the phosphohexose mutase family. Mg(2+) serves as cofactor. In terms of processing, activated by phosphorylation.

It catalyses the reaction alpha-D-glucosamine 1-phosphate = D-glucosamine 6-phosphate. Catalyzes the conversion of glucosamine-6-phosphate to glucosamine-1-phosphate. The polypeptide is Phosphoglucosamine mutase (Clostridium perfringens (strain SM101 / Type A)).